We begin with the raw amino-acid sequence, 460 residues long: GTPase Der (460 aa).

2 consecutive EngA-type G domains span residues 2-164 and 199-370; these read KKVI…DDEI and IKVG…ANFT. Residues 8–15, 55–59, 116–119, 205–212, 252–256, and 316–319 each bind GTP; these read GRPNVGKS, DSGGL, NKID, GRVNVGKS, DTAGI, and NKWD. The 84-residue stretch at 371-454 folds into the KH-like domain; it reads QKIATSKLND…PVILLPRKRG (84 aa).

This sequence belongs to the TRAFAC class TrmE-Era-EngA-EngB-Septin-like GTPase superfamily. EngA (Der) GTPase family. As to quaternary structure, associates with the 50S ribosomal subunit.

Its function is as follows. GTPase that plays an essential role in the late steps of ribosome biogenesis. This is GTPase Der from Campylobacter hominis (strain ATCC BAA-381 / DSM 21671 / CCUG 45161 / LMG 19568 / NCTC 13146 / CH001A).